A 324-amino-acid chain; its full sequence is UDP-N-acetylenolpyruvoylglucosamine reductase (324 aa).

The 168-residue stretch at 36-203 (FRAGGLAELM…THAIFEGFPE (168 aa)) folds into the FAD-binding PCMH-type domain. Arginine 183 is an active-site residue. Residue serine 232 is the Proton donor of the active site. Glutamate 302 is a catalytic residue.

This sequence belongs to the MurB family. The cofactor is FAD.

It localises to the cytoplasm. It carries out the reaction UDP-N-acetyl-alpha-D-muramate + NADP(+) = UDP-N-acetyl-3-O-(1-carboxyvinyl)-alpha-D-glucosamine + NADPH + H(+). It participates in cell wall biogenesis; peptidoglycan biosynthesis. Functionally, cell wall formation. This chain is UDP-N-acetylenolpyruvoylglucosamine reductase, found in Sinorhizobium fredii (strain NBRC 101917 / NGR234).